Here is a 240-residue protein sequence, read N- to C-terminus: Aldehyde dehydrogenase, cytosolic 2 (240 aa).

Residues Glu-8 and Cys-42 contribute to the active site. 4 positions are modified to N6-acetyllysine: Lys-106, Lys-149, Lys-151, and Lys-174.

The protein belongs to the aldehyde dehydrogenase family. In terms of assembly, homotetramer. In terms of tissue distribution, non-lens specific, predominant form expressed in the liver.

Its subcellular location is the cytoplasm. It catalyses the reaction an aldehyde + NAD(+) + H2O = a carboxylate + NADH + 2 H(+). It functions in the pathway alcohol metabolism; ethanol degradation; acetate from ethanol: step 2/2. Functionally, elephant shrews, in contrast to other mammals, possess both a lens- and a non-lens specific class-1 aldehyde dehydrogenase. Can convert/oxidize retinaldehyde to retinoic acid. In Macroscelides proboscideus (Short-eared elephant shrew), this protein is Aldehyde dehydrogenase, cytosolic 2.